The primary structure comprises 647 residues: Threonine--tRNA ligase (647 aa).

In terms of domain architecture, TGS spans 1 to 63; it reads MADISIKFPD…ASDGSIEIVT (63 aa). A catalytic region spans residues 242–540; it reads DHRVIGNQLD…LTEIYKGAFP (299 aa). Zn(2+) is bound by residues cysteine 336, histidine 387, and histidine 517.

The protein belongs to the class-II aminoacyl-tRNA synthetase family. Homodimer. It depends on Zn(2+) as a cofactor.

It is found in the cytoplasm. The catalysed reaction is tRNA(Thr) + L-threonine + ATP = L-threonyl-tRNA(Thr) + AMP + diphosphate + H(+). In terms of biological role, catalyzes the attachment of threonine to tRNA(Thr) in a two-step reaction: L-threonine is first activated by ATP to form Thr-AMP and then transferred to the acceptor end of tRNA(Thr). Also edits incorrectly charged L-seryl-tRNA(Thr). This is Threonine--tRNA ligase from Levilactobacillus brevis (strain ATCC 367 / BCRC 12310 / CIP 105137 / JCM 1170 / LMG 11437 / NCIMB 947 / NCTC 947) (Lactobacillus brevis).